A 368-amino-acid chain; its full sequence is Anhydro-N-acetylmuramic acid kinase (368 aa).

11 to 18 (GTSLDGID) contacts ATP.

The protein belongs to the anhydro-N-acetylmuramic acid kinase family.

The catalysed reaction is 1,6-anhydro-N-acetyl-beta-muramate + ATP + H2O = N-acetyl-D-muramate 6-phosphate + ADP + H(+). The protein operates within amino-sugar metabolism; 1,6-anhydro-N-acetylmuramate degradation. Its pathway is cell wall biogenesis; peptidoglycan recycling. Catalyzes the specific phosphorylation of 1,6-anhydro-N-acetylmuramic acid (anhMurNAc) with the simultaneous cleavage of the 1,6-anhydro ring, generating MurNAc-6-P. Is required for the utilization of anhMurNAc either imported from the medium or derived from its own cell wall murein, and thus plays a role in cell wall recycling. The polypeptide is Anhydro-N-acetylmuramic acid kinase (Sulfurimonas denitrificans (strain ATCC 33889 / DSM 1251) (Thiomicrospira denitrificans (strain ATCC 33889 / DSM 1251))).